The chain runs to 290 residues: Cytochrome bo(3) ubiquinol oxidase subunit 2 (290 aa).

Positions 1–24 (MISINFNNFFKTLLLILIAFTLHG) are cleaved as a signal peptide. The N-palmitoyl cysteine moiety is linked to residue C25. A lipid anchor (S-diacylglycerol cysteine) is attached at C25. Topologically, residues 25–42 (CDSILFNPHGIIAIQECS) are extracellular. The chain crosses the membrane as a helical span at residues 43–63 (ILLISFLIMLFVIIPVIFMTI). Residues 64–87 (YFSVKYRASNINAKYKPDWCDSKK) are Cytoplasmic-facing. The helical transmembrane segment at 88 to 108 (IEIIVWTIPISIILFLAFVTW) threads the bilayer. Residues 109–290 (NYSHILDPKK…TYSKNKVFKH (182 aa)) are Extracellular-facing.

Belongs to the cytochrome c oxidase subunit 2 family. Heterooctamer of two A chains, two B chains, two C chains and two D chains.

The protein localises to the cell membrane. Cytochrome bo(3) ubiquinol terminal oxidase is the component of the aerobic respiratory chain of E.coli that predominates when cells are grown at high aeration. Has proton pump activity across the membrane in addition to electron transfer, pumping 2 protons/electron. This Buchnera aphidicola subsp. Schizaphis graminum (strain Sg) protein is Cytochrome bo(3) ubiquinol oxidase subunit 2 (cyoA).